Reading from the N-terminus, the 755-residue chain is Cartilage oligomeric matrix protein (755 aa).

The N-terminal stretch at methionine 1–glycine 19 is a signal peptide. Positions glycine 21–arginine 84 are COMP N-terminal. The EGF-like 1 domain maps to proline 85–threonine 124. Cystine bridges form between cysteine 89–cysteine 100, cysteine 94–cysteine 109, cysteine 112–cysteine 123, cysteine 129–cysteine 140, cysteine 134–cysteine 149, cysteine 152–cysteine 176, cysteine 182–cysteine 195, cysteine 189–cysteine 204, cysteine 207–cysteine 219, cysteine 227–cysteine 241, cysteine 235–cysteine 251, cysteine 253–cysteine 264, cysteine 280–cysteine 285, cysteine 290–cysteine 310, cysteine 326–cysteine 346, cysteine 349–cysteine 369, cysteine 385–cysteine 405, cysteine 408–cysteine 428, cysteine 446–cysteine 466, cysteine 482–cysteine 502, and cysteine 518–cysteine 739. Asparagine 119 is a glycosylation site (N-linked (GlcNAc...) asparagine). Residues aspartate 125–threonine 177 form the EGF-like 2; calcium-binding domain. The region spanning aspartate 178–glutamine 220 is the EGF-like 3; calcium-binding domain. An EGF-like 4 domain is found at glycine 223–glycine 265. TSP type-3 repeat units follow at residues arginine 266–glutamine 298, glutamate 299–glutamine 334, arginine 335–glutamine 357, lysine 358–glutamine 393, serine 394–glutamine 416, arginine 417–glutamine 454, glutamine 455–glutamine 490, and glutamate 491–leucine 526. Disordered stretches follow at residues serine 296–lysine 341 and lysine 353–alanine 501. 2 stretches are compositionally biased toward basic and acidic residues: residues proline 332 to lysine 341 and lysine 353 to alanine 368. At serine 394 the chain carries Phosphoserine. Basic and acidic residues-rich tracts occupy residues aspartate 412 to valine 424 and aspartate 456 to alanine 465. The tract at residues threonine 525–valine 755 is mediates cell survival and induction of the IAP family of survival proteins. Residues arginine 530–proline 744 form the TSP C-terminal domain. An N-linked (GlcNAc...) asparagine glycan is attached at asparagine 740.

This sequence belongs to the thrombospondin family. Pentamer; disulfide-linked. Exists in a more compact conformation in the presence of calcium and shows a more extended conformation in the absence of calcium. Interacts with ITGB3, ITGA5 and FN1. Binding to FN1 requires the presence of divalent cations (Ca(2+), Mg(2+) or Mn(2+)). The greatest amount of binding is seen in the presence of Mn(2+). Interacts with MATN1, MATN3, MATN4 and ACAN. Binds heparin, heparan sulfate and chondroitin sulfate. EDTA dimishes significantly its binding to ACAN and abolishes its binding to MATN3, MATN4 and chondroitin sulfate. Interacts with collagen I, II and IX, and interaction with these collagens is dependent on the presence of zinc ions. Interacts with ADAMTS12. Interacts with ITGA7. Ca(2+) is required as a cofactor. In terms of processing, proteolytically cleaved by metalloproteases ADAMTS4 and ADAMTS1 with ADAMTS4 showing more potent activity. In terms of tissue distribution, expressed in cartilage, including nasal, knee epiphyseal and rib tissues. Abundantly expressed in chondrocyte and tendon extracellular matrix (at protein level).

The protein resides in the secreted. It is found in the extracellular space. Its subcellular location is the extracellular matrix. Plays a role in the structural integrity of cartilage via its interaction with other extracellular matrix proteins such as the collagens and fibronectin. Can mediate the interaction of chondrocytes with the cartilage extracellular matrix through interaction with cell surface integrin receptors. Could play a role in the pathogenesis of osteoarthritis. Potent suppressor of apoptosis in both primary chondrocytes and transformed cells. Suppresses apoptosis by blocking the activation of caspase-3 and by inducing the IAP family of survival proteins (BIRC3, BIRC2, BIRC5 and XIAP). Essential for maintaining a vascular smooth muscle cells (VSMCs) contractile/differentiated phenotype under physiological and pathological stimuli. Maintains this phenotype of VSMCs by interacting with ITGA7. This Mus musculus (Mouse) protein is Cartilage oligomeric matrix protein.